A 343-amino-acid polypeptide reads, in one-letter code: Pseudaminic acid synthase (343 aa).

The 57-residue stretch at 287 to 343 (SLYASKDIKKGEIFSEENVKSVRPSFGLHPKFYQELLGKKASKDIEFGDALKESDFR) folds into the AFP-like domain.

It belongs to the pseudaminic acid synthase family. It depends on a divalent metal cation as a cofactor.

The catalysed reaction is 2,4-diacetamido-2,4,6-trideoxy-beta-L-altrose + phosphoenolpyruvate + H2O = pseudaminate + phosphate. Catalyzes the fifth step in the biosynthesis of pseudaminic acid, a sialic-acid-like sugar that is used to modify flagellin. Catalyzes the condensation of phosphoenolpyruvate with 2,4-diacetamido-2,4,6-trideoxy-beta-l-altropyranose, forming pseudaminic acid. In Campylobacter jejuni subsp. jejuni serotype O:23/36 (strain 81-176), this protein is Pseudaminic acid synthase (pseI).